A 1164-amino-acid chain; its full sequence is DNA-directed RNA polymerase 133 kDa polypeptide (1164 aa).

This sequence belongs to the RNA polymerase beta chain family. The DNA-dependent RNA polymerase used for intermediate and late genes expression consists of eight subunits 147 kDa, 133 kDa, 35 kDa, 30 kDa, 22 kDa, 19 kDa, 18 kDa and 7 kDa totalling more than 500 kDa in mass. The same holoenzyme, with the addition of the transcription-specificity factor RAP94, is used for early gene expression.

It is found in the virion. The catalysed reaction is RNA(n) + a ribonucleoside 5'-triphosphate = RNA(n+1) + diphosphate. Its function is as follows. Part of the DNA-dependent RNA polymerase which catalyzes the transcription of viral DNA into RNA using the four ribonucleoside triphosphates as substrates. Responsible for the transcription of early, intermediate and late genes. DNA-dependent RNA polymerase associates with the early transcription factor (ETF), itself composed of OPG118 and OPG133, thereby allowing the early genes transcription. Late transcription, and probably also intermediate transcription, require newly synthesized RNA polymerase. The protein is DNA-directed RNA polymerase 133 kDa polypeptide (OPG151) of Homo sapiens (Human).